A 194-amino-acid polypeptide reads, in one-letter code: ATP synthase subunit 5, mitochondrial (194 aa).

F-type ATP synthases have 2 components, the catalytic core F(1) and the membrane-embedded component F(0), linked together by a central stalk and a peripheral stalk. The central stalk, also called rotor shaft, is often seen as part of F(1). The peripheral stalk is seen as part of F(0). F(0) contains the membrane channel next to the rotor. F-type ATP synthases form dimers but each monomer functions independently in ATP generation. The dimer consists of 18 different polypeptides: ATP1 (subunit alpha, part of F(1), 3 molecules per monomer), ATP2 (subunit beta, part of F(1), 3 molecules per monomer), ATP3 (subunit gamma, part of the central stalk), ATP4 (subunit b, part of the peripheral stalk), ATP5/OSCP (subunit 5/OSCP, part of the peripheral stalk), ATP6 (subunit a, part of the peripheral stalk), ATP7 (subunit d, part of the peripheral stalk), ATP8 (subunit 8, part of the peripheral stalk), OLI1 (subunit c, part of the rotor, 10 molecules per monomer), ATP14 (subunit h, part of the peripheral stalk), ATP15 (subunit epsilon, part of the central stalk), ATP16 (subunit delta, part of the central stalk), ATP17 (subunit f, part of the peripheral stalk), ATP18 (subunit i/j, part of the peripheral stalk). Dimer-specific subunits are ATP19 (subunit k, at interface between monomers), ATP20 (subunit g, at interface between monomers), TIM11 (subunit e, at interface between monomers). Also contains subunit L.

Its subcellular location is the mitochondrion inner membrane. Functionally, mitochondrial membrane ATP synthase (F(1)F(0) ATP synthase or Complex V) produces ATP from ADP in the presence of a proton gradient across the membrane which is generated by electron transport complexes of the respiratory chain. F-type ATP synthases consist of two structural domains, F(1) - containing the extramembraneous catalytic core, and F(0) - containing the membrane proton channel, linked together by a central stalk and a peripheral stalk. During catalysis, ATP synthesis in the catalytic domain of F(1) is coupled via a rotary mechanism of the central stalk subunits to proton translocation. Part of the complex F(0) domain and the peripheral stalk, which acts as a stator to hold the catalytic alpha/ATP1(3)beta/ATP2(3) subcomplex and subunit a/ATP6 static relative to the rotary elements. This is ATP synthase subunit 5, mitochondrial from Pichia angusta (Yeast).